A 385-amino-acid polypeptide reads, in one-letter code: Bifunctional chorismate mutase/prephenate dehydratase (385 aa).

In terms of domain architecture, Chorismate mutase spans methionine 1–leucine 92. Positions 11, 28, 39, 48, 52, 84, and 88 each coordinate substrate. One can recognise a Prephenate dehydratase domain in the interval asparagine 105–arginine 285. The tract at residues asparagine 286 to proline 385 is regulatory. An ACT domain is found at threonine 299–proline 376.

The protein resides in the cytoplasm. The catalysed reaction is chorismate = prephenate. It carries out the reaction prephenate + H(+) = 3-phenylpyruvate + CO2 + H2O. Its pathway is amino-acid biosynthesis; L-phenylalanine biosynthesis; phenylpyruvate from prephenate: step 1/1. It functions in the pathway metabolic intermediate biosynthesis; prephenate biosynthesis; prephenate from chorismate: step 1/1. Functionally, catalyzes the Claisen rearrangement of chorismate to prephenate and the decarboxylation/dehydration of prephenate to phenylpyruvate. The protein is Bifunctional chorismate mutase/prephenate dehydratase (pheA) of Buchnera aphidicola subsp. Acyrthosiphon pisum (strain APS) (Acyrthosiphon pisum symbiotic bacterium).